A 261-amino-acid chain; its full sequence is Carbonic anhydrase 1 (261 aa).

Ala-2 is subject to N-acetylalanine. In terms of domain architecture, Alpha-carbonic anhydrase spans 4 to 261 (PDWGYDGENG…LNGRTVKASF (258 aa)). Residue His-65 is the Proton donor/acceptor of the active site. Positions 95, 97, and 120 each coordinate Zn(2+). Residues Thr-200 and 200-201 (TH) contribute to the substrate site.

The protein belongs to the alpha-carbonic anhydrase family. The cofactor is Zn(2+).

It is found in the cytoplasm. It carries out the reaction hydrogencarbonate + H(+) = CO2 + H2O. It catalyses the reaction urea = cyanamide + H2O. Its activity is regulated as follows. Inhibited by acetazolamide. Functionally, catalyzes the reversible hydration of carbon dioxide. Can hydrate cyanamide to urea. This Bos taurus (Bovine) protein is Carbonic anhydrase 1 (CA1).